Here is a 325-residue protein sequence, read N- to C-terminus: Probable cell division protein WhiA (325 aa).

A DNA-binding region (H-T-H motif) is located at residues 280–313 (SLKELGSMLKNPLGKSGVNHRLRKIDKIAEELRK).

This sequence belongs to the WhiA family.

In terms of biological role, involved in cell division and chromosome segregation. The protein is Probable cell division protein WhiA of Caldicellulosiruptor saccharolyticus (strain ATCC 43494 / DSM 8903 / Tp8T 6331).